Consider the following 672-residue polypeptide: Methionine--tRNA ligase (672 aa).

The short motif at 12-22 (AYTNGPLHLGH) is the 'HIGH' region element. C144, C147, C156, and C159 together coordinate Zn(2+). Residues 330 to 334 (KMSTS) carry the 'KMSKS' region motif. T333 lines the ATP pocket. A tRNA-binding domain is found at 573–672 (DFAKIELKVA…KDLPVGSTIC (100 aa)).

Belongs to the class-I aminoacyl-tRNA synthetase family. MetG type 1 subfamily. As to quaternary structure, homodimer. Requires Zn(2+) as cofactor.

Its subcellular location is the cytoplasm. The enzyme catalyses tRNA(Met) + L-methionine + ATP = L-methionyl-tRNA(Met) + AMP + diphosphate. Its function is as follows. Is required not only for elongation of protein synthesis but also for the initiation of all mRNA translation through initiator tRNA(fMet) aminoacylation. The protein is Methionine--tRNA ligase of Methanococcus aeolicus (strain ATCC BAA-1280 / DSM 17508 / OCM 812 / Nankai-3).